The primary structure comprises 98 residues: Protein S100-A13 (98 aa).

An EF-hand domain is found at threonine 18–valine 53. Ca(2+) contacts are provided by serine 32, glutamate 37, aspartate 64, asparagine 66, aspartate 68, glutamate 70, and glutamate 75. Serine 32 bears the Phosphoserine mark.

It belongs to the S-100 family. As to quaternary structure, homodimer. Part of a copper-dependent multiprotein complex containing S100A13, FGF1 and SYT1. Interacts with FGF1 and SYT1. Interacts with IL1A.

The protein localises to the cytoplasm. The protein resides in the secreted. In terms of biological role, plays a role in the export of proteins that lack a signal peptide and are secreted by an alternative pathway. Binds two calcium ions per subunit. Binds one copper ion. Binding of one copper ion does not interfere with calcium binding. Required for the copper-dependent stress-induced export of IL1A and FGF1. The calcium-free protein binds to lipid vesicles containing phosphatidylserine, but not to vesicles containing phosphatidylcholine. This is Protein S100-A13 (S100A13) from Bos taurus (Bovine).